A 125-amino-acid chain; its full sequence is Protein ApaG (125 aa).

The region spanning 1–125 is the ApaG domain; that stretch reads MINAPRVCVQ…FRLAIPSLIH (125 aa).

The protein is Protein ApaG of Pectobacterium carotovorum subsp. carotovorum (strain PC1).